The sequence spans 156 residues: ATP synthase subunit b (156 aa).

Residues 7–29 traverse the membrane as a helical segment; it reads LIGQMGTFLVFWWFVNKVIWPMF.

The protein belongs to the ATPase B chain family. In terms of assembly, F-type ATPases have 2 components, F(1) - the catalytic core - and F(0) - the membrane proton channel. F(1) has five subunits: alpha(3), beta(3), gamma(1), delta(1), epsilon(1). F(0) has three main subunits: a(1), b(2) and c(10-14). The alpha and beta chains form an alternating ring which encloses part of the gamma chain. F(1) is attached to F(0) by a central stalk formed by the gamma and epsilon chains, while a peripheral stalk is formed by the delta and b chains.

It localises to the cell inner membrane. F(1)F(0) ATP synthase produces ATP from ADP in the presence of a proton or sodium gradient. F-type ATPases consist of two structural domains, F(1) containing the extramembraneous catalytic core and F(0) containing the membrane proton channel, linked together by a central stalk and a peripheral stalk. During catalysis, ATP synthesis in the catalytic domain of F(1) is coupled via a rotary mechanism of the central stalk subunits to proton translocation. In terms of biological role, component of the F(0) channel, it forms part of the peripheral stalk, linking F(1) to F(0). In Dichelobacter nodosus (strain VCS1703A), this protein is ATP synthase subunit b.